A 207-amino-acid chain; its full sequence is Large ribosomal subunit protein uL4 (207 aa).

Positions 52 to 77 (RGWADVSGGGRKPWRQKGTGRARAGS) are disordered.

The protein belongs to the universal ribosomal protein uL4 family. As to quaternary structure, part of the 50S ribosomal subunit.

Its function is as follows. One of the primary rRNA binding proteins, this protein initially binds near the 5'-end of the 23S rRNA. It is important during the early stages of 50S assembly. It makes multiple contacts with different domains of the 23S rRNA in the assembled 50S subunit and ribosome. Forms part of the polypeptide exit tunnel. In Moorella thermoacetica (strain ATCC 39073 / JCM 9320), this protein is Large ribosomal subunit protein uL4.